The sequence spans 327 residues: MTHSLRVIFAGTPEFAAAALAAIHEAGFPVPLVLTQPDRPAGRGMKLQASAVKRYALERGMAVAQPPSLRRAGKYPAEAVAALDLLHATPHDVMVVAAYGLLLPQEVLELPRHGCINIHASLLPRWRGAAPIHRAIEAGDAETGVTLMQMDAGLDTGAMLHEARVAIAPDDTTATLHDKLAAAGARLIVDALVELERTGALAATPQPADGVTYAEKIGKHEAALDWRKPAAALARQVRAFDPFPGGAGTLDGATLKLWAADAVPGRDDAAPGTIVDIGPDGVVIACGEGALRVTQLQKPGGKRLPAREFLAGAPLAVGQRFAPADAA.

Residue 121–124 (SLLP) coordinates (6S)-5,6,7,8-tetrahydrofolate.

The protein belongs to the Fmt family.

It catalyses the reaction L-methionyl-tRNA(fMet) + (6R)-10-formyltetrahydrofolate = N-formyl-L-methionyl-tRNA(fMet) + (6S)-5,6,7,8-tetrahydrofolate + H(+). Functionally, attaches a formyl group to the free amino group of methionyl-tRNA(fMet). The formyl group appears to play a dual role in the initiator identity of N-formylmethionyl-tRNA by promoting its recognition by IF2 and preventing the misappropriation of this tRNA by the elongation apparatus. This chain is Methionyl-tRNA formyltransferase, found in Burkholderia pseudomallei (strain K96243).